A 180-amino-acid polypeptide reads, in one-letter code: Decaprenylphosphoryl-5-phosphoribose phosphatase (180 aa).

Helical transmembrane passes span 31–51 (ALSH…AGAL), 61–81 (LAVG…KRVV), 116–136 (VLLA…PMAL), and 139–159 (LVLG…GALV).

The protein belongs to the PA-phosphatase related phosphoesterase family.

Its subcellular location is the cell membrane. The enzyme catalyses trans,octa-cis-decaprenylphospho-beta-D-ribofuranose 5-phosphate + H2O = trans,octa-cis-decaprenylphospho-beta-D-ribofuranose + phosphate. It participates in cell wall biogenesis; cell wall polysaccharide biosynthesis. Functionally, phosphatase involved in the biosynthesis of decaprenylphosphoryl arabinose (DPA), which serves as the arabinose donor for the biosynthesis of arabinogalactan, the major mycobacterial cell wall polysaccharide. Catalyzes the dephosphorylation of decaprenylphosphoryl-5-phosphoribose (DPPR) to decaprenyl-phosphoribose (DPR). The protein is Decaprenylphosphoryl-5-phosphoribose phosphatase of Mycolicibacterium smegmatis (strain ATCC 700084 / mc(2)155) (Mycobacterium smegmatis).